Reading from the N-terminus, the 205-residue chain is Probable GTP-binding protein EngB (205 aa).

The EngB-type G domain occupies 27–201 (EGMEIAFAGR…AAKLDSWFSS (175 aa)). GTP contacts are provided by residues 35–42 (GRSNAGKS), 62–66 (GRTQL), 80–83 (DLPG), 147–150 (TKAD), and 180–182 (FSA). Residues Ser-42 and Thr-64 each coordinate Mg(2+).

The protein belongs to the TRAFAC class TrmE-Era-EngA-EngB-Septin-like GTPase superfamily. EngB GTPase family. It depends on Mg(2+) as a cofactor.

Functionally, necessary for normal cell division and for the maintenance of normal septation. The chain is Probable GTP-binding protein EngB from Mannheimia succiniciproducens (strain KCTC 0769BP / MBEL55E).